Reading from the N-terminus, the 804-residue chain is Leucine--tRNA ligase (804 aa).

Positions 40–51 (PYPSGAGLHVGH) match the 'HIGH' region motif. A 'KMSKS' region motif is present at residues 576-580 (KMSKS). Lys579 lines the ATP pocket.

The protein belongs to the class-I aminoacyl-tRNA synthetase family.

It is found in the cytoplasm. The catalysed reaction is tRNA(Leu) + L-leucine + ATP = L-leucyl-tRNA(Leu) + AMP + diphosphate. The polypeptide is Leucine--tRNA ligase (Bacillus licheniformis (strain ATCC 14580 / DSM 13 / JCM 2505 / CCUG 7422 / NBRC 12200 / NCIMB 9375 / NCTC 10341 / NRRL NRS-1264 / Gibson 46)).